A 354-amino-acid chain; its full sequence is Peptide chain release factor 1 (354 aa).

N5-methylglutamine is present on Q230.

The protein belongs to the prokaryotic/mitochondrial release factor family. Methylated by PrmC. Methylation increases the termination efficiency of RF1.

It localises to the cytoplasm. Its function is as follows. Peptide chain release factor 1 directs the termination of translation in response to the peptide chain termination codons UAG and UAA. The polypeptide is Peptide chain release factor 1 (Rhodospirillum rubrum (strain ATCC 11170 / ATH 1.1.1 / DSM 467 / LMG 4362 / NCIMB 8255 / S1)).